We begin with the raw amino-acid sequence, 678 residues long: Glycine--tRNA ligase beta subunit (678 aa).

Belongs to the class-II aminoacyl-tRNA synthetase family. In terms of assembly, tetramer of two alpha and two beta subunits.

The protein resides in the cytoplasm. The catalysed reaction is tRNA(Gly) + glycine + ATP = glycyl-tRNA(Gly) + AMP + diphosphate. This is Glycine--tRNA ligase beta subunit from Streptococcus pneumoniae (strain 70585).